Here is a 736-residue protein sequence, read N- to C-terminus: Dimethylamine dehydrogenase (736 aa).

Cys-31 carries the post-translational modification S-6-FMN cysteine. 176-179 (YGAH) contacts substrate. The Proton donor role is filled by Tyr-181. Residues Arg-229 and Arg-329 each coordinate FMN. Cys-352, Cys-355, Cys-358, and Cys-371 together coordinate [4Fe-4S] cluster. Residue 398–427 (DVLIVGAGPAGSECARVLMERGYTVHLVDT) coordinates ADP.

This sequence in the N-terminal section; belongs to the NADH:flavin oxidoreductase/NADH oxidase family. Requires FMN as cofactor. [4Fe-4S] cluster serves as cofactor.

The catalysed reaction is dimethylamine + oxidized [electron-transfer flavoprotein] + H2O + H(+) = methylamine + reduced [electron-transfer flavoprotein] + formaldehyde. This chain is Dimethylamine dehydrogenase (dmd), found in Hyphomicrobium sp. (strain x).